The following is a 615-amino-acid chain: Chaperone protein HscA homolog (615 aa).

It belongs to the heat shock protein 70 family.

Its function is as follows. Chaperone involved in the maturation of iron-sulfur cluster-containing proteins. Has a low intrinsic ATPase activity which is markedly stimulated by HscB. The polypeptide is Chaperone protein HscA homolog (Aeromonas hydrophila subsp. hydrophila (strain ATCC 7966 / DSM 30187 / BCRC 13018 / CCUG 14551 / JCM 1027 / KCTC 2358 / NCIMB 9240 / NCTC 8049)).